The sequence spans 314 residues: Hydroxyacyl-coenzyme A dehydrogenase, mitochondrial (314 aa).

The N-terminal 12 residues, 1–12, are a transit peptide targeting the mitochondrion; the sequence is MAFATRQLVRSL. NAD(+) is bound by residues 34–39 and Asp57; that span reads GGGLMG. Ser73 and Lys80 together coordinate CoA. Residue Lys80 is modified to N6-succinyllysine. An N6-acetyllysine; alternate mark is found at Lys81 and Lys87. N6-succinyllysine; alternate occurs at positions 81 and 87. Residue Glu122 coordinates NAD(+). Lys125 bears the N6-acetyllysine mark. Residue Lys127 participates in NAD(+) binding. Lys127 carries the post-translational modification N6-(2-hydroxyisobutyryl)lysine. Position 136 is an N6-acetyllysine; alternate (Lys136). Residue Lys136 is modified to N6-succinyllysine; alternate. Ser149 and Asn173 together coordinate NAD(+). Position 149 (Ser149) interacts with CoA. Lys179 is modified (N6-acetyllysine). Residues Lys185, Lys192, and Lys202 each carry the N6-acetyllysine; alternate modification. N6-succinyllysine; alternate is present on residues Lys185, Lys192, and Lys202. An N6-succinyllysine modification is found at Lys206. Residues Lys212 and Lys241 each carry the N6-acetyllysine; alternate modification. N6-succinyllysine; alternate occurs at positions 212 and 241. Lys305 is an NAD(+) binding site. Lys312 bears the N6-acetyllysine; alternate mark. Lys312 is subject to N6-succinyllysine; alternate.

Belongs to the 3-hydroxyacyl-CoA dehydrogenase family. In terms of assembly, homodimer. Interacts with GLUD1; this interaction inhibits the activation of glutamate dehydrogenase 1 (GLUD1). Succinylation at Lys-81, adjacent to a coenzyme A binding site. Desuccinylated by SIRT5.

It localises to the mitochondrion matrix. The enzyme catalyses a (3S)-3-hydroxyacyl-CoA + NAD(+) = a 3-oxoacyl-CoA + NADH + H(+). It carries out the reaction (3S)-3-hydroxybutanoyl-CoA + NAD(+) = acetoacetyl-CoA + NADH + H(+). The catalysed reaction is (3S)-hydroxydecanoyl-CoA + NAD(+) = 3-oxodecanoyl-CoA + NADH + H(+). It catalyses the reaction (3S)-hydroxyhexadecanoyl-CoA + NAD(+) = 3-oxohexadecanoyl-CoA + NADH + H(+). Its pathway is lipid metabolism; fatty acid beta-oxidation. Functionally, mitochondrial fatty acid beta-oxidation enzyme that catalyzes the third step of the beta-oxidation cycle for medium and short-chain 3-hydroxy fatty acyl-CoAs (C4 to C10). Plays a role in the control of insulin secretion by inhibiting the activation of glutamate dehydrogenase 1 (GLUD1), an enzyme that has an important role in regulating amino acid-induced insulin secretion. Plays a role in the maintenance of normal spermatogenesis through the reduction of fatty acid accumulation in the testes. This chain is Hydroxyacyl-coenzyme A dehydrogenase, mitochondrial (HADH), found in Sus scrofa (Pig).